A 399-amino-acid chain; its full sequence is S-adenosylmethionine synthase (399 aa).

Residue histidine 16 participates in ATP binding. Residue aspartate 18 coordinates Mg(2+). Residue glutamate 44 coordinates K(+). 2 residues coordinate L-methionine: glutamate 57 and glutamine 100. Positions 100–110 (QSPDIAQGVDT) are flexible loop. ATP contacts are provided by residues 175-177 (DGK), 246-247 (KF), aspartate 255, 261-262 (RK), alanine 278, and lysine 282. Residue aspartate 255 coordinates L-methionine. Lysine 286 is a binding site for L-methionine. Lysine 341 participates in a covalent cross-link: Isoglutamyl lysine isopeptide (Lys-Gln) (interchain with Q-Cter in protein Pup).

The protein belongs to the AdoMet synthase family. Homotetramer; dimer of dimers. It depends on Mg(2+) as a cofactor. Requires K(+) as cofactor.

The protein localises to the cytoplasm. It carries out the reaction L-methionine + ATP + H2O = S-adenosyl-L-methionine + phosphate + diphosphate. The protein operates within amino-acid biosynthesis; S-adenosyl-L-methionine biosynthesis; S-adenosyl-L-methionine from L-methionine: step 1/1. In terms of biological role, catalyzes the formation of S-adenosylmethionine (AdoMet) from methionine and ATP. The overall synthetic reaction is composed of two sequential steps, AdoMet formation and the subsequent tripolyphosphate hydrolysis which occurs prior to release of AdoMet from the enzyme. The sequence is that of S-adenosylmethionine synthase from Mycolicibacterium smegmatis (strain ATCC 700084 / mc(2)155) (Mycobacterium smegmatis).